The chain runs to 78 residues: Putative defensin-like protein 133 (78 aa).

Positions 1-24 (MKRSFLLLLTILTIFIILGQGVMG) are cleaved as a signal peptide. Disulfide bonds link C34–C75, C44–C68, C49–C72, and C53–C74.

This sequence belongs to the DEFL family.

The protein resides in the secreted. This is Putative defensin-like protein 133 (LCR33) from Arabidopsis thaliana (Mouse-ear cress).